Consider the following 299-residue polypeptide: Bifunctional protein FolD (299 aa).

Residues 164–166 (GRS) and Ile234 contribute to the NADP(+) site.

The protein belongs to the tetrahydrofolate dehydrogenase/cyclohydrolase family. As to quaternary structure, homodimer.

The catalysed reaction is (6R)-5,10-methylene-5,6,7,8-tetrahydrofolate + NADP(+) = (6R)-5,10-methenyltetrahydrofolate + NADPH. It catalyses the reaction (6R)-5,10-methenyltetrahydrofolate + H2O = (6R)-10-formyltetrahydrofolate + H(+). It functions in the pathway one-carbon metabolism; tetrahydrofolate interconversion. In terms of biological role, catalyzes the oxidation of 5,10-methylenetetrahydrofolate to 5,10-methenyltetrahydrofolate and then the hydrolysis of 5,10-methenyltetrahydrofolate to 10-formyltetrahydrofolate. This Christiangramia forsetii (strain DSM 17595 / CGMCC 1.15422 / KT0803) (Gramella forsetii) protein is Bifunctional protein FolD.